Consider the following 492-residue polypeptide: Bifunctional purine biosynthesis protein PurH (492 aa).

The region spanning 1-144 is the MGS-like domain; sequence MKKAILSVSN…KNFKHVTTIV (144 aa).

The protein belongs to the PurH family.

It carries out the reaction (6R)-10-formyltetrahydrofolate + 5-amino-1-(5-phospho-beta-D-ribosyl)imidazole-4-carboxamide = 5-formamido-1-(5-phospho-D-ribosyl)imidazole-4-carboxamide + (6S)-5,6,7,8-tetrahydrofolate. The catalysed reaction is IMP + H2O = 5-formamido-1-(5-phospho-D-ribosyl)imidazole-4-carboxamide. Its pathway is purine metabolism; IMP biosynthesis via de novo pathway; 5-formamido-1-(5-phospho-D-ribosyl)imidazole-4-carboxamide from 5-amino-1-(5-phospho-D-ribosyl)imidazole-4-carboxamide (10-formyl THF route): step 1/1. The protein operates within purine metabolism; IMP biosynthesis via de novo pathway; IMP from 5-formamido-1-(5-phospho-D-ribosyl)imidazole-4-carboxamide: step 1/1. The protein is Bifunctional purine biosynthesis protein PurH of Staphylococcus haemolyticus (strain JCSC1435).